The chain runs to 2320 residues: Bromodomain and WD repeat-containing protein 1 (2320 aa).

8 WD repeats span residues G184 to T223, G226 to V265, G268 to S311, R322 to E365, S366 to I405, F424 to N463, G466 to H506, and Q514 to K553. Positions Q668–G691 are disordered. The residue at position 687 (T687) is a Phosphothreonine. Phosphoserine occurs at positions 696, 701, and 710. Disordered regions lie at residues N809–D867 and S895–R925. Low complexity-rich tracts occupy residues E814–S824 and Y854–D867. The segment covering P907–K918 has biased composition (basic residues). One can recognise a Bromo 1 domain in the interval W1157–Q1264. Residues E1271–G1304 form a disordered region. Acidic residues predominate over residues E1277–S1289. A Phosphoserine modification is found at S1289. The Bromo 2 domain maps to Y1313 to I1418. A disordered region spans residues R1434 to C1593. The segment covering N1443 to I1454 has biased composition (polar residues). A compositionally biased stretch (basic residues) spans R1455–S1464. S1475 carries the phosphoserine modification. Positions S1475–I1496 are enriched in polar residues. T1477 bears the Phosphothreonine mark. The residue at position 1479 (S1479) is a Phosphoserine. Positions S1497–A1509 are enriched in low complexity. Over residues P1520–E1529 the composition is skewed to polar residues. Over residues S1535–S1548 the composition is skewed to low complexity. Residues E1549 to S1561 show a composition bias toward basic and acidic residues. A phosphoserine mark is found at S1605, S1607, S1678, S1683, and S1686. Disordered stretches follow at residues A1670–T1805, K1817–K1839, and D1862–R1899. Residues H1676–E1687 are compositionally biased toward basic and acidic residues. Residues P1701 to V1712 are compositionally biased toward polar residues. 2 stretches are compositionally biased toward basic and acidic residues: residues S1715–V1728 and L1751–C1769. Phosphoserine occurs at positions 1755, 1756, 1786, 1788, 1793, and 1820. A compositionally biased stretch (acidic residues) spans D1821–R1832. Phosphothreonine is present on T1867. Phosphoserine is present on residues S1871, S1904, S1905, S1907, S1910, and S1943. T1955 carries the phosphothreonine modification. Disordered stretches follow at residues L2014 to Q2077 and T2112 to K2184. A phosphoserine mark is found at S2018, S2020, and S2052. Basic and acidic residues-rich tracts occupy residues E2054 to F2069 and V2114 to K2139. The span at I2140–E2165 shows a compositional bias: polar residues. A Phosphothreonine modification is found at T2164. A phosphoserine mark is found at S2166 and V2214.

In terms of assembly, interacts with SMARCA4. In terms of tissue distribution, ubiquitously expressed. Expressed in respiratory epithelial cells and testis spermatozoa.

It is found in the cytoplasm. It localises to the nucleus. Its subcellular location is the cell projection. The protein resides in the cilium membrane. The protein localises to the cytoskeleton. It is found in the flagellum axoneme. In terms of biological role, may be a transcriptional activator. May be involved in chromatin remodeling. Plays a role in the regulation of cell morphology and cytoskeletal organization. Required in the control of cell shape. This chain is Bromodomain and WD repeat-containing protein 1 (BRWD1), found in Homo sapiens (Human).